Here is a 393-residue protein sequence, read N- to C-terminus: UDP-glucose 6-dehydrogenase (393 aa).

NAD(+)-binding residues include Val-11, Asp-31, Lys-36, Thr-85, Thr-120, and Glu-147. Substrate-binding positions include 143-147 (EFLRE), Lys-199, Asn-203, 244-248 (YNNPS), and Gly-252. Tyr-254 is an NAD(+) binding site. Catalysis depends on Cys-255, which acts as the Nucleophile. Lys-258 provides a ligand contact to NAD(+). A substrate-binding site is contributed by Lys-309. An NAD(+)-binding site is contributed by Arg-316.

It belongs to the UDP-glucose/GDP-mannose dehydrogenase family. In terms of assembly, homodimer.

The catalysed reaction is UDP-alpha-D-glucose + 2 NAD(+) + H2O = UDP-alpha-D-glucuronate + 2 NADH + 3 H(+). The protein operates within nucleotide-sugar biosynthesis; UDP-alpha-D-glucuronate biosynthesis; UDP-alpha-D-glucuronate from UDP-alpha-D-glucose: step 1/1. It participates in capsule biogenesis; capsule polysaccharide biosynthesis. Its function is as follows. Catalyzes the formation of UDP-glucuronic acid which is required for capsular polysaccharide synthesis. Does not catalyze the formation of glucuronamide moiety of the capsular polysaccharide. The polypeptide is UDP-glucose 6-dehydrogenase (Campylobacter jejuni subsp. jejuni serotype O:2 (strain ATCC 700819 / NCTC 11168)).